Reading from the N-terminus, the 90-residue chain is Antitoxin VapB35 (90 aa).

Residues 53–90 form a disordered region; it reads GSVQPARVHGPAPRPTIPMRGGLDSGTLLERMRAEERY.

It belongs to the phD/YefM antitoxin family.

Antitoxin component of a type II toxin-antitoxin (TA) system. Neutralizes the effect of cognate toxin VapC35. In Mycobacterium tuberculosis (strain CDC 1551 / Oshkosh), this protein is Antitoxin VapB35 (vapB35).